A 152-amino-acid chain; its full sequence is Deoxyuridine 5'-triphosphate nucleotidohydrolase (152 aa).

Residues 71–73, N84, 88–90, and M98 each bind substrate; these read RSG and LID.

It belongs to the dUTPase family. Mg(2+) is required as a cofactor.

The enzyme catalyses dUTP + H2O = dUMP + diphosphate + H(+). It functions in the pathway pyrimidine metabolism; dUMP biosynthesis; dUMP from dCTP (dUTP route): step 2/2. This enzyme is involved in nucleotide metabolism: it produces dUMP, the immediate precursor of thymidine nucleotides and it decreases the intracellular concentration of dUTP so that uracil cannot be incorporated into DNA. The sequence is that of Deoxyuridine 5'-triphosphate nucleotidohydrolase from Pectobacterium carotovorum subsp. carotovorum (strain PC1).